Here is a 92-residue protein sequence, read N- to C-terminus: MDKLKKPILTEKSISLLEKRQYTFELDKNITKSEAKKMIETHFQVKVIHMNSYYLPINKKIRKNIGKLKRKKRMIFTLKVGDSIPFSSINMN.

The protein belongs to the universal ribosomal protein uL23 family. In terms of assembly, part of the 50S ribosomal subunit.

The protein resides in the plastid. It is found in the chloroplast. Binds to 23S rRNA. In Chara vulgaris (Common stonewort), this protein is Large ribosomal subunit protein uL23c (rpl23).